The sequence spans 1165 residues: MVEKSSERFDKQMAGRLGDIDFTGVSRTRGKFVRVTSSTDPAEIYQILTKQWGLAPPHLVVALMGGDEVAQLKPWLRDTLRKGLVKAAQSTGAWILTSGLRFGITKNLGQAVRDHSLASTSPKVRVVAIGIAPWNMIQNRDLLLSAKPDHPATYPTEDLPYGAVYSLDCNHSHFILVDEDPKRPGATGEMRVKMLKHISLQRTGYGGTGSIEIPVLCLLVHGEPRILQKMYKNIQNSIPWLILAGSGGVADILVTLMDRGCWDADIVQELLINTFPDGLHSTEITSWTKLIQRILDHGHLLTVHDPEQDSELDTVILKALVKACKSQSQEAQDFLDELKLAVAWNRVDIAKSEIFSGDVQWSAQDLEEVMMEALVNDKPDFVRLFVDNGVNIKQFLTYGRLQELYCSVSEKNLLHTLLLKKNQERQAQLARKRMSGNPNNELGDRKFRFTFHEVSKVLKDFLDDTCKGFYQKLPAERMGKGRLFHSQKNLPDMDRRCEHPWRDLFLWAILQNRQEMANYFWAMGPEAVAAALVGCKIMKEMAHLATEAESARSMKNAKYEQFAMDLFSECYSNSEDRAYSLLVRKTCCWSKATVLNIATLAEAKCFFAHDGVQALLTKVWWGAMRTDTSISRLVLTFFIPPLVWTSLIKFNPEEQVSKDEGEPFAELDSLETEQALLLTDGDPVAGEGSAETAARSCSATFIRVVLRRWNRFWSAPVTVFMGNVIMYFAFLILFSYVLLLDFRPPPPYGPSAAEIILYFWVFTLVLEEIRQSFFTDEDMSILKKMKLYVEDNWNKCDMVAISLFVVGLSCRMAMSTYEAGRTVLALDFMVFTLRLIHIFAIHKQLGPKIIIVERMIKDVFFFLFFLSVWLIAYGVTTQALLHPNDPRIDWVFRRALYRPYLHIFGQIPLEEIDAAKMPDDNCTTDVQEIILGTLPPCPNIYANWLVILLLVIYLLVTNVLLLNLLIAMFSYTFQVVQENADIFWKFQRYNLIVEYHSRPALAPPFIIISHITQALLSFIKKTENTQDLLERELPSGLDQKLMTWETVQKENYLAKLEHEHRESSGERLRYTSSKVQTLLRMVGGFKDQEKRMATVETEVRYCGEVLSWIAECFHKSTLKCDRDAPKAPRSIAGSSRDQQPQGAKRQQPAGHPAYGTDKKLPFIDH.

The Cytoplasmic portion of the chain corresponds to 1–715; sequence MVEKSSERFD…LRRWNRFWSA (715 aa). The residue at position 121 (serine 121) is a Phosphoserine. Ca(2+) contacts are provided by glutamate 212, cysteine 324, aspartate 333, aspartate 336, and glutamate 337. A helical transmembrane segment spans residues 716-740; the sequence is PVTVFMGNVIMYFAFLILFSYVLLL. Residues 741-751 lie on the Extracellular side of the membrane; that stretch reads DFRPPPPYGPS. Residues 752–771 form a helical membrane-spanning segment; that stretch reads AAEIILYFWVFTLVLEEIRQ. Ca(2+) is bound by residues glutamate 768 and glutamine 771. Topologically, residues 772 to 792 are cytoplasmic; that stretch reads SFFTDEDMSILKKMKLYVEDN. Residues 793-811 traverse the membrane as a helical segment; it reads WNKCDMVAISLFVVGLSCR. Ca(2+) is bound by residues asparagine 794 and aspartate 797. Residues 812–818 are Extracellular-facing; sequence MAMSTYE. A helical transmembrane segment spans residues 819 to 841; sequence AGRTVLALDFMVFTLRLIHIFAI. The Cytoplasmic portion of the chain corresponds to 842–850; sequence HKQLGPKII. A helical membrane pass occupies residues 851-880; the sequence is IVERMIKDVFFFLFFLSVWLIAYGVTTQAL. Residues 881 to 889 lie on the Extracellular side of the membrane; that stretch reads LHPNDPRID. An intramembrane region (pore-forming) is located at residues 890–930; that stretch reads WVFRRALYRPYLHIFGQIPLEEIDAAKMPDDNCTTDVQEII. A Selectivity filter motif is present at residues 904–906; it reads FGQ. The Extracellular portion of the chain corresponds to 931–942; it reads LGTLPPCPNIYA. The helical transmembrane segment at 943–977 threads the bilayer; it reads NWLVILLLVIYLLVTNVLLLNLLIAMFSYTFQVVQ. Over 978–1165 the chain is Cytoplasmic; the sequence is ENADIFWKFQ…TDKKLPFIDH (188 aa). Glutamate 994 lines the Ca(2+) pocket. The segment at 1122–1165 is disordered; the sequence is RDAPKAPRSIAGSSRDQQPQGAKRQQPAGHPAYGTDKKLPFIDH. Residues 1132 to 1141 are compositionally biased toward polar residues; that stretch reads AGSSRDQQPQ. Positions 1156-1165 are enriched in basic and acidic residues; that stretch reads TDKKLPFIDH.

This sequence belongs to the transient receptor (TC 1.A.4) family. LTrpC subfamily. TRPM5 sub-subfamily. As to quaternary structure, homotetramer.

It localises to the cell membrane. The catalysed reaction is Na(+)(in) = Na(+)(out). It carries out the reaction K(+)(in) = K(+)(out). With respect to regulation, ca(2+)-activated cation channel. Displays voltage dependence modulation. Regulated by PI(4,5)P2 levels. PI(4,5)P 2 reverses the Ca(2+) -induced desensitization of channels. Is highly temperature-sensitive. Functionally, monovalent cation-selective ion channel activated by intracellular Ca(2+) in a voltage- and temperature-dependent manner. Mediates the transport of Na(+), K(+) and Cs(+) ions equally well. Activated directly by increase in intracellular Ca(2+), but is impermeable to it. The activation mechanism of TRPM5 involves a multistep process. TRPM5 activation involves ligand binding (i.e., tastant molecule, glucose stimulation) to Gq/G-protein coupled receptors (GPCR) and leads to the breakdown of phosphatidylinositol bisphosphate (PIP2) into diacylglycerol (DAG) and inositol trisphosphate (IP3), IP3 binds to its receptors in the endoplasmic reticulum and cause Ca(2+) release. Simultaneously with the intracellular Ca(2+) release, DAG activates the protein kinase C (PKC), which phosphorylates the TRPM5 channel. This phosphorylation combined with the bound Ca(2+), leads to a robust inward current allowing the entry of sodium ions (Na+) into the cell. This ion influx depolarizes the cell membrane, generating action potentials that propagate TRPM5 signals. The polypeptide is Transient receptor potential cation channel subfamily M member 5 (Danio rerio (Zebrafish)).